Consider the following 306-residue polypeptide: Acetaldehyde dehydrogenase 3 (306 aa).

The Acyl-thioester intermediate role is filled by C131. NAD(+) is bound by residues 162–170 and N273; that span reads SVGPGTRKN.

The protein belongs to the acetaldehyde dehydrogenase family.

The enzyme catalyses acetaldehyde + NAD(+) + CoA = acetyl-CoA + NADH + H(+). This chain is Acetaldehyde dehydrogenase 3, found in Burkholderia lata (strain ATCC 17760 / DSM 23089 / LMG 22485 / NCIMB 9086 / R18194 / 383).